A 293-amino-acid polypeptide reads, in one-letter code: uncharacterized protein (293 aa).

Residues T43 and Y105 each act as charge relay system in the active site. Y131 serves as the catalytic Proton donor. K159 (schiff-base intermediate with substrate) is an active-site residue.

This sequence belongs to the DapA family. In terms of assembly, homotetramer.

The protein localises to the cytoplasm. This is an uncharacterized protein from Thermococcus onnurineus (strain NA1).